The sequence spans 343 residues: N(4)-bis(aminopropyl)spermidine synthase (343 aa).

Belongs to the branched-chain polyamine synthase family.

The protein localises to the cytoplasm. It carries out the reaction 2 S-adenosyl 3-(methylsulfanyl)propylamine + spermidine = N(4)-bis(aminopropyl)spermidine + 2 S-methyl-5'-thioadenosine + 2 H(+). The protein operates within amine and polyamine biosynthesis. Its function is as follows. Involved in the biosynthesis of branched-chain polyamines, which support the growth of thermophiles under high-temperature conditions. Catalyzes the sequential condensation of spermidine with the aminopropyl groups of decarboxylated S-adenosylmethionines to produce N(4)-bis(aminopropyl)spermidine via N(4)-aminopropylspermidine. The sequence is that of N(4)-bis(aminopropyl)spermidine synthase from Thermus thermophilus.